A 379-amino-acid chain; its full sequence is Peritrophin-48 (379 aa).

The first 20 residues, 1–20 (MKAKTLTATLALILLAFAQA), serve as a signal peptide directing secretion. Chitin-binding type-2 domains follow at residues 25 to 83 (ASYC…NCFF) and 86 to 143 (ANPC…NTGN). Intrachain disulfides connect C60/C73 and C120/C133. N-linked (GlcNAc...) asparagine glycans are attached at residues N150 and N168. 3 Chitin-binding type-2 domains span residues 151-208 (LSVC…ACSR), 224-283 (TSPC…RTLK), and 285-356 (CNRC…ACEN). C185 and C198 are joined by a disulfide. N247 and N252 each carry an N-linked (GlcNAc...) asparagine glycan. A disulfide bond links C324 and C337. 3 N-linked (GlcNAc...) asparagine glycosylation sites follow: N341, N356, and N373.

In terms of processing, glycosylated. As to expression, larval peritrophic membrane.

Functionally, binds chitin and may bind related oligosaccharide structures. In Chrysomya bezziana (Old world screw-worm fly), this protein is Peritrophin-48.